A 1239-amino-acid polypeptide reads, in one-letter code: Structural polyprotein (1239 aa).

Residues 15–95 are disordered; sequence RPAPVQRYIP…KKKSKPGKRM (81 aa). The segment at 36–62 is host transcription inhibition; sequence RGPSQLQQLVAALGALALQPKQKQKRA. Residues 38 to 56 are compositionally biased toward low complexity; sequence PSQLQQLVAALGALALQPK. Residues 55–91 carry the Nuclear localization signal motif; sequence PKQKQKRAQKKPKKTPPPKPKKTQKPKKPTQKKKSKP. Basic residues predominate over residues 57 to 95; it reads QKQKRAQKKPKKTPPPKPKKTQKPKKPTQKKKSKPGKRM. A binding to the viral RNA region spans residues 78–106; sequence QKPKKPTQKKKSKPGKRMRNCMKIENDCI. The ribosome-binding stretch occupies residues 91–105; that stretch reads PGKRMRNCMKIENDC. C105 and C120 are disulfide-bonded. Residues 105–253 form the Peptidase S3 domain; the sequence is CIFPVMLDGK…RITPEESVEW (149 aa). Catalysis depends on H131, which acts as the Charge relay system. Residues 136-146 carry the Nuclear export signal motif; that stretch reads IDNPELAKLTF. Residues 147 to 152 are interaction with spike glycoprotein E2; it reads KKSSKY. The active-site Charge relay system is D153. The tract at residues 175 to 185 is dimerization of the capsid protein; sequence PEGHYNWHHGA. Catalysis depends on S205, which acts as the Charge relay system. A dimerization of the capsid protein region spans residues 211 to 215; that stretch reads DNTGK. Positions 254 to 269 are functions as an uncleaved signal peptide for the precursor of protein E3/E2; the sequence is SAAALNITALCVLQNL. Intrachain disulfides connect C264-C273, C278-C282, C281-C313, C339-C443, C342-C348, C411-C425, C471-C585, C519-C545, and C521-C539. Residue N268 is glycosylated (N-linked (GlcNAc...) asparagine; by host). The Extracellular segment spans residues 322–686; that stretch reads SVAHFEAYKA…HYYDLYPYWT (365 aa). The chain crosses the membrane as a helical span at residues 687-707; the sequence is ITVLASLGLLIVISSGFSCFL. S-palmitoyl cysteine; by host attachment occurs at residues C705 and C708. The Cytoplasmic segment spans residues 708-751; sequence CSVARTKCLTPYQLAPGAQLPTFIALLCCAKSARADTLDDFSYL. The segment at 710–714 is interaction with the capsid protein; the sequence is VARTK. Residues C715, C735, and C736 are each lipidated (S-palmitoyl cysteine; by host). C715 and C736 are disulfide-bonded. Residues 752–756 are Extracellular-facing; sequence WTNNQ. Residues 757–777 form a helical membrane-spanning segment; it reads AMFWLQLASPVAAFLCLSYCC. At 778–779 the chain is on the cytoplasmic side; it reads RN. The helical transmembrane segment at 780–800 threads the bilayer; the sequence is LACCMKIFLGISGLCVIATQA. Residues 801–1216 are Extracellular-facing; sequence YEHSTTMPNQ…WQWLAHTTSG (416 aa). Cystine bridges form between C849–C914, C862–C894, C863–C896, and C868–C878. The segment at 884-901 is E1 fusion peptide loop; it reads VYPFMWGGAYCFCDTENS. N941, N1009, and N1070 each carry an N-linked (GlcNAc...) asparagine; by host glycan. Intrachain disulfides connect C1059–C1071, C1101–C1176, C1106–C1180, and C1128–C1170. The chain crosses the membrane as a helical span at residues 1217-1237; it reads PLTILVVAIIVVVVVSIVVCA. C1236 carries the S-palmitoyl cysteine; by host lipid modification. Topologically, residues 1238–1239 are cytoplasmic; it reads RH.

In terms of assembly, homodimer. Homomultimer. Interacts with host karyopherin KPNA4; this interaction allows the nuclear import of the viral capsid protein. Interacts with spike glycoprotein E2. Interacts with host IRAK1; the interaction leads to inhibition of IRAK1-dependent signaling. The precursor of protein E3/E2 and E1 form a heterodimer shortly after synthesis. As to quaternary structure, interacts with spike glycoprotein E1. The precursor of protein E3/E2 and E1 form a heterodimer shortly after synthesis. Processing of the precursor of protein E3/E2 into E2 and E3 results in a heterodimer of the spike glycoproteins E2 and E1. Spike at virion surface are constituted of a trimer of E2-E1 heterodimers. After target cell attachment and endocytosis, E1 change conformation to form homotrimers. Interacts with 6K protein. In terms of assembly, interacts with spike glycoprotein E1. Processing of the precursor of protein E3/E2 into E2 and E3 results in a heterodimer of the spike glycoproteins E2 and E1. Spike at virion surface are constituted of a trimer of E2-E1 heterodimers. Interacts with 6K protein. Interacts with host MXRA8; this interaction mediates virus entry. Interacts with the capsid protein. Oligomer. Interacts with spike glycoprotein E1. Interacts with spike glycoprotein E2. Post-translationally, structural polyprotein: Specific enzymatic cleavages in vivo yield mature proteins. Capsid protein is auto-cleaved during polyprotein translation, unmasking a signal peptide at the N-terminus of the precursor of E3/E2. The remaining polyprotein is then targeted to the host endoplasmic reticulum, where host signal peptidase cleaves it into pE2, 6K and E1 proteins. pE2 is further processed to mature E3 and E2 by host furin in trans-Golgi vesicle. Palmitoylated via thioester bonds. These palmitoylations may induce disruption of the C-terminus transmembrane. This would result in the reorientation of E2 C-terminus from lumenal to cytoplasmic side. In terms of processing, N-glycosylated. Post-translationally, palmitoylated via thioester bonds.

The protein localises to the virion. It is found in the host cytoplasm. It localises to the host cell membrane. The protein resides in the host nucleus. Its subcellular location is the virion membrane. The protein localises to the host Golgi apparatus. It is found in the host trans-Golgi network. It localises to the host endoplasmic reticulum. The enzyme catalyses Autocatalytic release of the core protein from the N-terminus of the togavirus structural polyprotein by hydrolysis of a -Trp-|-Ser- bond.. Its function is as follows. Forms an icosahedral capsid with a T=4 symmetry composed of 240 copies of the capsid protein surrounded by a lipid membrane through which penetrate 80 spikes composed of trimers of E1-E2 heterodimers. The capsid protein binds to the viral RNA genome at a site adjacent to a ribosome binding site for viral genome translation following genome release. Possesses a protease activity that results in its autocatalytic cleavage from the nascent structural protein. Following its self-cleavage, the capsid protein transiently associates with ribosomes, and within several minutes the protein binds to viral RNA and rapidly assembles into icosahedric core particles. The resulting nucleocapsid eventually associates with the cytoplasmic domain of the spike glycoprotein E2 at the cell membrane, leading to budding and formation of mature virions. In case of infection, new virions attach to target cells and after clathrin-mediated endocytosis their membrane fuses with the host endosomal membrane. This leads to the release of the nucleocapsid into the cytoplasm, followed by an uncoating event necessary for the genomic RNA to become accessible. The uncoating might be triggered by the interaction of capsid proteins with ribosomes. Binding of ribosomes would release the genomic RNA since the same region is genomic RNA-binding and ribosome-binding. Specifically inhibits interleukin-1 receptor-associated kinase 1/IRAK1-dependent signaling during viral entry, representing a means by which the alphaviruses may evade innate immune detection and activation prior to viral gene expression. Functionally, provides the signal sequence for the translocation of the precursor of protein E3/E2 to the host endoplasmic reticulum. Furin-cleaved E3 remains associated with spike glycoprotein E1 and mediates pH protection of the latter during the transport via the secretory pathway. After virion release from the host cell, the assembly protein E3 is gradually released in the extracellular space. In terms of biological role, plays a role in viral attachment to target host cell, by binding to the cell receptor MXRA8. Synthesized as a p62 precursor which is processed by furin at the cell membrane just before virion budding, giving rise to E2-E1 heterodimer. The p62-E1 heterodimer is stable, whereas E2-E1 is unstable and dissociate at low pH. p62 is processed at the last step, presumably to avoid E1 fusion activation before its final export to cell surface. E2 C-terminus contains a transitory transmembrane that would be disrupted by palmitoylation, resulting in reorientation of the C-terminal tail from lumenal to cytoplasmic side. This step is critical since E2 C-terminus is involved in budding by interacting with capsid proteins. This release of E2 C-terminus in cytoplasm occurs lately in protein export, and precludes premature assembly of particles at the endoplasmic reticulum membrane. Acts as a viroporin that participates in virus glycoprotein processing and transport to the plasma membrane, cell permeabilization and budding of viral particles. The cation channel is permeable to Na(+)&gt;K(+)&gt;Ca(2+) in vitro. Disrupts the calcium homeostasis of the cell, probably at the endoplasmic reticulum level. This leads to cytoplasmic calcium elevation. Because of its lipophilic properties, the 6K protein is postulated to influence the selection of lipids that interact with the transmembrane domains of the glycoproteins, which, in turn, affects the deformability of the bilayer required for the extreme curvature that occurs as budding proceeds. Present in low amount in virions, about 3% compared to viral glycoproteins. Its function is as follows. Class II viral fusion protein. Fusion activity is inactive as long as E1 is bound to E2 in mature virion. After virus attachment to target cell via host MXRA8 and endocytosis, acidification of the endosome induce dissociation of E1/E2 heterodimer and concomitant trimerization of the E1 subunits. This E1 trimer is fusion active, and promotes release of viral nucleocapsid in cytoplasm after endosome and viral membrane fusion. Efficient fusion requires the presence of cholesterol and sphingolipid in the target membrane. The sequence is that of Structural polyprotein from Anopheles amictus (Common banded mosquito).